The sequence spans 233 residues: Snake venom serine protease BthaTL (233 aa).

In terms of domain architecture, Peptidase S1 spans 1–224 (VIGGDECDIN…YLPWIQSIIA (224 aa)). 6 disulfide bridges follow: C7–C138, C25–C41, C73–C231, C117–C185, C149–C164, and C175–C200. Catalysis depends on charge relay system residues H40 and D85. The active-site Charge relay system is S179.

It belongs to the peptidase S1 family. Snake venom subfamily. As to quaternary structure, monomer. Expressed by the venom gland.

Its subcellular location is the secreted. Functionally, snake venom serine protease that may act in the hemostasis system of the prey. The sequence is that of Snake venom serine protease BthaTL from Bothrops alternatus (Urutu).